A 92-amino-acid polypeptide reads, in one-letter code: Small ribosomal subunit protein uS19 (92 aa).

The protein belongs to the universal ribosomal protein uS19 family.

In terms of biological role, protein S19 forms a complex with S13 that binds strongly to the 16S ribosomal RNA. This Bartonella henselae (strain ATCC 49882 / DSM 28221 / CCUG 30454 / Houston 1) (Rochalimaea henselae) protein is Small ribosomal subunit protein uS19.